The chain runs to 168 residues: Probable prefoldin subunit 5 (168 aa).

The protein belongs to the prefoldin subunit alpha family. In terms of assembly, heterohexamer of two PFD-alpha type and four PFD-beta type subunits.

In terms of biological role, binds specifically to cytosolic chaperonin (c-CPN) and transfers target proteins to it. Binds to nascent polypeptide chain and promotes folding in an environment in which there are many competing pathways for nonnative proteins. This chain is Probable prefoldin subunit 5, found in Drosophila melanogaster (Fruit fly).